Consider the following 241-residue polypeptide: Probable transcriptional regulatory protein PSHAb0060 (241 aa).

It belongs to the TACO1 family.

It localises to the cytoplasm. This chain is Probable transcriptional regulatory protein PSHAb0060, found in Pseudoalteromonas translucida (strain TAC 125).